The sequence spans 208 residues: Putative dioxygenase RBE_0329 (208 aa).

The protein belongs to the intradiol ring-cleavage dioxygenase family.

The polypeptide is Putative dioxygenase RBE_0329 (Rickettsia bellii (strain RML369-C)).